A 237-amino-acid chain; its full sequence is Uridylate kinase (237 aa).

13-16 (KLSG) provides a ligand contact to ATP. G53 is a binding site for UMP. The ATP site is built by G54 and R58. UMP-binding positions include D73 and 134 to 141 (AGLPYFST). Positions 162, 168, and 171 each coordinate ATP.

It belongs to the UMP kinase family. In terms of assembly, homohexamer.

It is found in the cytoplasm. The enzyme catalyses UMP + ATP = UDP + ADP. It functions in the pathway pyrimidine metabolism; CTP biosynthesis via de novo pathway; UDP from UMP (UMPK route): step 1/1. Inhibited by UTP. Catalyzes the reversible phosphorylation of UMP to UDP. This chain is Uridylate kinase, found in Leifsonia xyli subsp. xyli (strain CTCB07).